A 460-amino-acid chain; its full sequence is Chromosomal replication initiator protein DnaA (460 aa).

A domain I, interacts with DnaA modulators region spans residues 1–83; that stretch reads MENIWLEAQT…EFHVADEKPE (83 aa). Basic and acidic residues predominate over residues 78-121; that stretch reads ADEKPEAAPEEKPEKEGKPAREKEKDKDKEKEKDREKEKDKKEL. The interval 78–122 is disordered; sequence ADEKPEAAPEEKPEKEGKPAREKEKDKDKEKEKDREKEKDKKELV. The interval 83–123 is domain II; it reads EAAPEEKPEKEGKPAREKEKDKDKEKEKDREKEKDKKELVP. Residues 124–340 are domain III, AAA+ region; the sequence is NLNPKYTFES…GMLIRLEAFA (217 aa). Residues G168, G170, K171, and T172 each contribute to the ATP site. Positions 341 to 460 are domain IV, binds dsDNA; sequence SLTGQEITLS…VEDIRKKLFT (120 aa).

Belongs to the DnaA family. In terms of assembly, oligomerizes as a right-handed, spiral filament on DNA at oriC.

The protein localises to the cytoplasm. In terms of biological role, plays an essential role in the initiation and regulation of chromosomal replication. ATP-DnaA binds to the origin of replication (oriC) to initiate formation of the DNA replication initiation complex once per cell cycle. Binds the DnaA box (a 9 base pair repeat at the origin) and separates the double-stranded (ds)DNA. Forms a right-handed helical filament on oriC DNA; dsDNA binds to the exterior of the filament while single-stranded (ss)DNA is stabiized in the filament's interior. The ATP-DnaA-oriC complex binds and stabilizes one strand of the AT-rich DNA unwinding element (DUE), permitting loading of DNA polymerase. After initiation quickly degrades to an ADP-DnaA complex that is not apt for DNA replication. Binds acidic phospholipids. This is Chromosomal replication initiator protein DnaA from Geobacter sp. (strain M21).